Consider the following 200-residue polypeptide: Pyridoxal 5'-phosphate synthase subunit PdxT (200 aa).

Position 52-54 (52-54) interacts with L-glutamine; that stretch reads GES. Cysteine 84 acts as the Nucleophile in catalysis. Residues arginine 116 and 145 to 146 contribute to the L-glutamine site; that span reads IR. Catalysis depends on charge relay system residues histidine 181 and glutamate 183.

It belongs to the glutaminase PdxT/SNO family. In terms of assembly, in the presence of PdxS, forms a dodecamer of heterodimers. Only shows activity in the heterodimer.

The enzyme catalyses aldehydo-D-ribose 5-phosphate + D-glyceraldehyde 3-phosphate + L-glutamine = pyridoxal 5'-phosphate + L-glutamate + phosphate + 3 H2O + H(+). It carries out the reaction L-glutamine + H2O = L-glutamate + NH4(+). It functions in the pathway cofactor biosynthesis; pyridoxal 5'-phosphate biosynthesis. Functionally, catalyzes the hydrolysis of glutamine to glutamate and ammonia as part of the biosynthesis of pyridoxal 5'-phosphate. The resulting ammonia molecule is channeled to the active site of PdxS. The sequence is that of Pyridoxal 5'-phosphate synthase subunit PdxT from Saccharolobus islandicus (strain L.S.2.15 / Lassen #1) (Sulfolobus islandicus).